We begin with the raw amino-acid sequence, 442 residues long: Probable carboxypeptidase PAAG_00768 (442 aa).

The first 20 residues, 1-20 (MKLQYLVALLFVQAVPPVTA), serve as a signal peptide directing secretion. A glycan (N-linked (GlcNAc...) asparagine) is linked at Asn-102. Residue Asp-160 participates in Zn(2+) binding. The active-site Proton acceptor is Glu-192. A Zn(2+)-binding site is contributed by Glu-193. The N-linked (GlcNAc...) asparagine glycan is linked to Asn-343.

It belongs to the peptidase M20A family. The cofactor is Zn(2+).

It localises to the secreted. This is Probable carboxypeptidase PAAG_00768 from Paracoccidioides lutzii (strain ATCC MYA-826 / Pb01) (Paracoccidioides brasiliensis).